We begin with the raw amino-acid sequence, 163 residues long: ATP synthase subunit b (163 aa).

Residues 10 to 29 traverse the membrane as a helical segment; the sequence is VFMQMFHFLLMLVVLRLFAY.

It belongs to the ATPase B chain family. As to quaternary structure, F-type ATPases have 2 components, F(1) - the catalytic core - and F(0) - the membrane proton channel. F(1) has five subunits: alpha(3), beta(3), gamma(1), delta(1), epsilon(1). F(0) has three main subunits: a(1), b(2) and c(10-14). The alpha and beta chains form an alternating ring which encloses part of the gamma chain. F(1) is attached to F(0) by a central stalk formed by the gamma and epsilon chains, while a peripheral stalk is formed by the delta and b chains.

The protein localises to the cell membrane. F(1)F(0) ATP synthase produces ATP from ADP in the presence of a proton or sodium gradient. F-type ATPases consist of two structural domains, F(1) containing the extramembraneous catalytic core and F(0) containing the membrane proton channel, linked together by a central stalk and a peripheral stalk. During catalysis, ATP synthesis in the catalytic domain of F(1) is coupled via a rotary mechanism of the central stalk subunits to proton translocation. Its function is as follows. Component of the F(0) channel, it forms part of the peripheral stalk, linking F(1) to F(0). This chain is ATP synthase subunit b, found in Desulforudis audaxviator (strain MP104C).